The following is a 198-amino-acid chain: Dual specificity protein phosphatase 13B (198 aa).

The Tyrosine-protein phosphatase domain maps to 45-193 (HINEVWPNLF…LQVLDNRLRR (149 aa)). C138 (phosphocysteine intermediate) is an active-site residue.

It belongs to the protein-tyrosine phosphatase family. Non-receptor class dual specificity subfamily. Most abundantly expressed in the testis.

It carries out the reaction O-phospho-L-tyrosyl-[protein] + H2O = L-tyrosyl-[protein] + phosphate. The enzyme catalyses O-phospho-L-seryl-[protein] + H2O = L-seryl-[protein] + phosphate. The catalysed reaction is O-phospho-L-threonyl-[protein] + H2O = L-threonyl-[protein] + phosphate. Its function is as follows. Dual specificity phosphatase that dephosphorylates MAPK8/JNK and MAPK14/p38, but not MAPK1/ERK2, in vitro. Exhibits intrinsic phosphatase activity towards both phospho-seryl/threonyl and -tyrosyl residues, with similar specific activities in vitro. This chain is Dual specificity protein phosphatase 13B, found in Mus musculus (Mouse).